Here is a 397-residue protein sequence, read N- to C-terminus: Argininosuccinate synthase (397 aa).

Alanine 8–serine 16 provides a ligand contact to ATP. Residue tyrosine 87 coordinates L-citrulline. An ATP-binding site is contributed by glycine 117. L-aspartate-binding residues include threonine 119, asparagine 123, and aspartate 124. Position 123 (asparagine 123) interacts with L-citrulline. L-citrulline contacts are provided by arginine 127, serine 175, glutamate 259, and tyrosine 271.

This sequence belongs to the argininosuccinate synthase family. Type 1 subfamily. As to quaternary structure, homotetramer.

It is found in the cytoplasm. It catalyses the reaction L-citrulline + L-aspartate + ATP = 2-(N(omega)-L-arginino)succinate + AMP + diphosphate + H(+). Its pathway is amino-acid biosynthesis; L-arginine biosynthesis; L-arginine from L-ornithine and carbamoyl phosphate: step 2/3. This Streptomyces clavuligerus protein is Argininosuccinate synthase.